Reading from the N-terminus, the 501-residue chain is Ribose import ATP-binding protein RbsA (501 aa).

ABC transporter domains are found at residues 5 to 241 and 252 to 495; these read LQLK…VGRK and APGE…VGKL. 37 to 44 provides a ligand contact to ATP; the sequence is GENGAGKS.

This sequence belongs to the ABC transporter superfamily. Ribose importer (TC 3.A.1.2.1) family. In terms of assembly, the complex is composed of an ATP-binding protein (RbsA), two transmembrane proteins (RbsC) and a solute-binding protein (RbsB).

It is found in the cell inner membrane. It carries out the reaction D-ribose(out) + ATP + H2O = D-ribose(in) + ADP + phosphate + H(+). In terms of biological role, part of the ABC transporter complex RbsABC involved in ribose import. Responsible for energy coupling to the transport system. The polypeptide is Ribose import ATP-binding protein RbsA (Salmonella paratyphi A (strain ATCC 9150 / SARB42)).